We begin with the raw amino-acid sequence, 244 residues long: RAD51-like protein 1 (244 aa).

Interacts with brc-2 and rad-51.

It localises to the nucleus. Functionally, has a role in the homologous recombination repair (HRR) of genomic DNA during meiosis. Required for rad-51 recruitment onto ssDNA gaps generated at stalled replication fork barriers. In Caenorhabditis briggsae, this protein is RAD51-like protein 1.